A 146-amino-acid polypeptide reads, in one-letter code: Large ribosomal subunit protein uL13 (146 aa).

It belongs to the universal ribosomal protein uL13 family. As to quaternary structure, part of the 50S ribosomal subunit.

This protein is one of the early assembly proteins of the 50S ribosomal subunit, although it is not seen to bind rRNA by itself. It is important during the early stages of 50S assembly. The chain is Large ribosomal subunit protein uL13 from Sulfurisphaera tokodaii (strain DSM 16993 / JCM 10545 / NBRC 100140 / 7) (Sulfolobus tokodaii).